A 66-amino-acid chain; its full sequence is DNA-directed RNA polymerase subunit Rpo10 (66 aa).

Zn(2+) is bound by residues C7, C10, C44, and C45.

The protein belongs to the archaeal Rpo10/eukaryotic RPB10 RNA polymerase subunit family. Part of the 13-subunit RNA polymerase complex. The cofactor is Zn(2+).

The protein localises to the cytoplasm. The catalysed reaction is RNA(n) + a ribonucleoside 5'-triphosphate = RNA(n+1) + diphosphate. DNA-dependent RNA polymerase (RNAP) catalyzes the transcription of DNA into RNA using the four ribonucleoside triphosphates as substrates. This Sulfolobus acidocaldarius (strain ATCC 33909 / DSM 639 / JCM 8929 / NBRC 15157 / NCIMB 11770) protein is DNA-directed RNA polymerase subunit Rpo10.